The chain runs to 79 residues: Translational regulator CsrA (79 aa).

This sequence belongs to the CsrA/RsmA family. In terms of assembly, homodimer; the beta-strands of each monomer intercalate to form a hydrophobic core, while the alpha-helices form wings that extend away from the core.

Its subcellular location is the cytoplasm. In terms of biological role, a translational regulator that binds mRNA to regulate translation initiation and/or mRNA stability. Usually binds in the 5'-UTR at or near the Shine-Dalgarno sequence preventing ribosome-binding, thus repressing translation. Its main target seems to be the major flagellin gene, while its function is anatagonized by FliW. In Solidesulfovibrio magneticus (strain ATCC 700980 / DSM 13731 / RS-1) (Desulfovibrio magneticus), this protein is Translational regulator CsrA.